Consider the following 435-residue polypeptide: GPI-anchor transamidase component PIGU (435 aa).

Residues 2–3 are Cytoplasmic-facing; the sequence is AA. Residues 4 to 22 traverse the membrane as a helical segment; that stretch reads PLVLVLVVAVTVRAALFRS. The Lumenal segment spans residues 23 to 78; it reads SLAEFISERVEVVSPLSSWKRVVEGLSLLDLGVSPYSGAVFHETPLIIYLFHFLID. The helical transmembrane segment at 79 to 99 threads the bilayer; sequence YAELVFMITDALTAIALYFAI. The Cytoplasmic segment spans residues 100-136; it reads QDFNKVVFKKQKLLLELDQYAPDVAELIRTPMEMRYI. 4 consecutive transmembrane segments (helical) span residues 137 to 158, 159 to 178, 179 to 194, and 195 to 205; these read PLKV…VAKS, TCAI…IKGS, AFLS…YQSL, and YPLTLFVPGLL. Over 206–222 the chain is Cytoplasmic; that stretch reads YLLQRQYIPVKMKSKAF. A cardiolipin is bound by residues lysine 216 and methionine 217. A helical membrane pass occupies residues 223–244; the sequence is WIFSWEYAMMYVGSLVVIICLS. At 245-286 the chain is on the lumenal side; that stretch reads FFLLSSWDFIPAVYGFILSVPDLTPNIGLFWYFFAEMFEHFS. The helical transmembrane segment at 287–306 threads the bilayer; sequence LFFVCVFQINVFFYTIPLAI. Residues 307–311 are Cytoplasmic-facing; sequence KLKEH. Lysine 309 is a binding site for a cardiolipin. A run of 2 helical transmembrane segments spans residues 312-331 and 332-345; these read PIFF…SYPT and VGDV…FPVW. Residues 346 to 354 are Cytoplasmic-facing; the sequence is NHLYRFLRN. The helical transmembrane segment at 355–372 threads the bilayer; the sequence is IFVLTCIIIVCSLLFPVL. Topologically, residues 373–384 are lumenal; that stretch reads WHLWIYAGSANS. Positions 383 and 385 each coordinate a 2-acyl-6-[6-phosphoethanolamine-alpha-D-mannosyl-(1-&gt;2)-6-phosphoethanolamine-alpha-D-mannosyl-(1-&gt;6)-2-phosphoethanolamine-alpha-D-mannosyl-(1-&gt;4)-alpha-D-glucosaminyl]-1-(1-radyl,2-acyl-sn-glycero-3-phospho)-1D-myo-inositol. Residues 385 to 406 form a helical membrane-spanning segment; the sequence is NFFYAITLTFNVGQILLISDYF. Residues 407 to 435 are Cytoplasmic-facing; the sequence is YAFLRREYYLTHGLYLTAKDGTEAMLVLK.

Belongs to the PIGU family. Heteropentamer. Part of the GPI-anchor transamidase complex, consisting of PIGK, PIGT, PIGS, PIGU and GAA1.

The protein localises to the endoplasmic reticulum membrane. It participates in glycolipid biosynthesis; glycosylphosphatidylinositol-anchor biosynthesis. Functionally, component of the glycosylphosphatidylinositol-anchor (GPI-anchor) transamidase (GPI-T) complex that catalyzes the formation of the linkage between a proprotein and a GPI-anchor and participates in GPI anchored protein biosynthesis. Binds the lipid portion of GPI-anchor. May act as an organizer in the transmembrane layer to recruit other subunits, and thus is essential for assembly of the complex. The chain is GPI-anchor transamidase component PIGU from Homo sapiens (Human).